Reading from the N-terminus, the 1480-residue chain is UDP-N-acetylglucosamine--peptide N-acetylglucosaminyltransferase (1480 aa).

TPR repeat units follow at residues 38–71 (IFLY…SKQK), 113–146 (VQVL…STSN), 176–209 (ATIL…IKDP), and 288–321 (STIC…QPSF). Over residues 468–485 (PQEKESPKSDKIASEKPL) the composition is skewed to basic and acidic residues. The interval 468–497 (PQEKESPKSDKIASEKPLVESNPGRSRTPS) is disordered. TPR repeat units lie at residues 613–646 (YEPF…NPRF) and 648–680 (DGYL…DPDN). Residues 1093–1128 (LSLDGSDATSSSVDSGIGSRTHSEAPIGGGDKDEGA) form a disordered region. Over residues 1099-1112 (DATSSSVDSGIGSR) the composition is skewed to polar residues. UDP contacts are provided by residues Gln1269, Lys1272, 1333–1336 (HIRR), 1351–1353 (GST), and Asp1357.

It belongs to the glycosyltransferase 41 family. O-GlcNAc transferase subfamily.

The protein resides in the cytoplasm. It is found in the nucleus. It catalyses the reaction L-seryl-[protein] + UDP-N-acetyl-alpha-D-glucosamine = 3-O-(N-acetyl-beta-D-glucosaminyl)-L-seryl-[protein] + UDP + H(+). It carries out the reaction L-threonyl-[protein] + UDP-N-acetyl-alpha-D-glucosamine = 3-O-(N-acetyl-beta-D-glucosaminyl)-L-threonyl-[protein] + UDP + H(+). It functions in the pathway protein modification; protein glycosylation. Catalyzes the transfer of a single N-acetylglucosamine from UDP-GlcNAc to a serine or threonine residue in cytoplasmic and nuclear proteins resulting in their modification with a beta-linked N-acetylglucosamine (O-GlcNAc). This Giardia intestinalis (strain ATCC 50803 / WB clone C6) (Giardia lamblia) protein is UDP-N-acetylglucosamine--peptide N-acetylglucosaminyltransferase.